Consider the following 118-residue polypeptide: Immunoglobulin lambda variable 2-8 (118 aa).

Positions 1-19 (MAWALLLLTLLTQGTGSWA) are cleaved as a signal peptide. Pyrrolidone carboxylic acid is present on Q20. The interval 20–44 (QSALTQPPSASGSPGQSVTISCTGT) is framework-1. One can recognise an Ig-like domain in the interval 20–118 (QSALTQPPSA…CSSYAGSNNF (99 aa)). A disulfide bond links C41 and C109. Residues 45–53 (SSDVGGYNY) are complementarity-determining-1. The framework-2 stretch occupies residues 54–70 (VSWYQQHPGKAPKLMIY). The segment at 71-73 (EVS) is complementarity-determining-2. Residues 74-109 (KRPSGVPDRFSGSKSGNTASLTVSGLQAEDEADYYC) form a framework-3 region. A disordered region spans residues 76-97 (PSGVPDRFSGSKSGNTASLTVS). Positions 85–97 (GSKSGNTASLTVS) are enriched in polar residues. The segment at 110-118 (SSYAGSNNF) is complementarity-determining-3.

Immunoglobulins are composed of two identical heavy chains and two identical light chains; disulfide-linked.

The protein resides in the secreted. Its subcellular location is the cell membrane. V region of the variable domain of immunoglobulin light chains that participates in the antigen recognition. Immunoglobulins, also known as antibodies, are membrane-bound or secreted glycoproteins produced by B lymphocytes. In the recognition phase of humoral immunity, the membrane-bound immunoglobulins serve as receptors which, upon binding of a specific antigen, trigger the clonal expansion and differentiation of B lymphocytes into immunoglobulins-secreting plasma cells. Secreted immunoglobulins mediate the effector phase of humoral immunity, which results in the elimination of bound antigens. The antigen binding site is formed by the variable domain of one heavy chain, together with that of its associated light chain. Thus, each immunoglobulin has two antigen binding sites with remarkable affinity for a particular antigen. The variable domains are assembled by a process called V-(D)-J rearrangement and can then be subjected to somatic hypermutations which, after exposure to antigen and selection, allow affinity maturation for a particular antigen. The chain is Immunoglobulin lambda variable 2-8 from Homo sapiens (Human).